The following is a 114-amino-acid chain: Histone H2A.Z-specific chaperone chz-1 (114 aa).

Residues methionine 1–phenylalanine 22 are compositionally biased toward polar residues. A disordered region spans residues methionine 1–glutamate 114. A compositionally biased stretch (basic and acidic residues) spans serine 24–glycine 40. Acidic residues-rich tracts occupy residues glutamate 41–aspartate 68 and proline 93–glutamate 114.

The protein belongs to the CHZ1 family. Forms a heterotrimer with H2A.Z-H2B, stabilizing the association of the histone dimer. Also, with a lower affinity, forms a heterotrimer with H2A-H2B.

It localises to the nucleus. Functionally, forms a chaperone-bound H2A.Z-H2B complex that acts as a source for SWR1 complex-dependent H2A to H2A.Z histone replacement in chromatin. This is Histone H2A.Z-specific chaperone chz-1 (chz-1) from Neurospora crassa (strain ATCC 24698 / 74-OR23-1A / CBS 708.71 / DSM 1257 / FGSC 987).